Reading from the N-terminus, the 548-residue chain is Solute carrier family 22 member 7 (548 aa).

A helical transmembrane segment spans residues 21-41 (VALLALPRVLLPLHFLLPIFL). N-linked (GlcNAc...) asparagine glycosylation occurs at Asn-91. 11 helical membrane-spanning segments follow: residues 146–166 (AASTFFFAGVLVGAVAFGYLS), 180–200 (VSTLVLGLASAASVSYVMFAI), 204–224 (LTGSALAGFTIIVMPLELEWL), 234–254 (VLSSTFWTGGVMLLALVGYLI), 259–279 (WLLLAVTLPCAPGILSLWWVP), 346–366 (ISLCCVVVWFGVNFSYYGLSL), 376–397 (YQTQLLFGAVELPSKLLVYLSV), 404–423 (LTQAGTLLGTALAFGTRLLV), 432–452 (TVLAVMGKAFSEAAFTTAYLF), 466–486 (MGLTALVGRLGGSLAPLAALL), and 493–513 (LPKLTYGGIALLAAGTALLLP). The active-site Important for glutamate counteranion efflux is the Phe-441. Residues 522–548 (ETIQDVERKSAPTSLQEEEMPMKQVQN) form a disordered region.

It belongs to the major facilitator (TC 2.A.1) superfamily. Organic cation transporter (TC 2.A.1.19) family. As to expression, mainly expressed in liver and kidney. In kidney, expressed in proximal tubular cells. Also expressed in pancreas, small intestine, spinal cord, lung, brain and heart. Expressed in fetal liver.

The protein resides in the basolateral cell membrane. The protein localises to the apical cell membrane. It is found in the cell membrane. It localises to the cytoplasm. Its subcellular location is the cytosol. The catalysed reaction is orotate(out) + L-glutamate(in) = orotate(in) + L-glutamate(out). It carries out the reaction 3',5'-cyclic GMP(in) = 3',5'-cyclic GMP(out). It catalyses the reaction GMP(in) = GMP(out). The enzyme catalyses 2'-deoxyguanosine(in) = 2'-deoxyguanosine(out). The catalysed reaction is GDP(in) = GDP(out). It carries out the reaction guanosine(in) = guanosine(out). It catalyses the reaction GTP(in) = GTP(out). The enzyme catalyses 3',5'-cyclic AMP(in) = 3',5'-cyclic AMP(out). The catalysed reaction is creatinine(in) = creatinine(out). It carries out the reaction prostaglandin E2(out) = prostaglandin E2(in). It catalyses the reaction 2-oxoglutarate(in) = 2-oxoglutarate(out). The enzyme catalyses glutarate(in) = glutarate(out). The catalysed reaction is urate(out) = urate(in). It carries out the reaction estrone 3-sulfate(out) = estrone 3-sulfate(in). It catalyses the reaction prostaglandin F2alpha(out) = prostaglandin F2alpha(in). Functions as a Na(+)-independent bidirectional multispecific transporter. Contributes to the renal and hepatic elimination of endogenous organic compounds from the systemic circulation into the urine and bile, respectively. Capable of transporting a wide range of purine and pyrimidine nucleobases, nucleosides and nucleotides, with cGMP, 2'deoxyguanosine and GMP being the preferred substrates. Functions as a pH- and chloride-independent cGMP bidirectional facilitative transporter that can regulate both intracellular and extracellular levels of cGMP and may be involved in cGMP signaling pathways. Mediates orotate/glutamate bidirectional exchange and most likely display a physiological role in hepatic release of glutamate into the blood. Involved in renal secretion and possible reabsorption of creatinine. Able to uptake prostaglandin E2 (PGE2) and may contribute to PGE2 renal excretion. Also transports alpha-ketoglutarate and urate. Apart from the orotate/glutamate exchange, the counterions for the uptake of other SLC22A7/OAT2 substrates remain to be identified. In terms of biological role, non functional transporter. Functionally, involved in the uptake of prostaglandin F2-alpha (PGF2-alpha). This Homo sapiens (Human) protein is Solute carrier family 22 member 7.